Reading from the N-terminus, the 564-residue chain is Threonine--tRNA ligase (564 aa).

The catalytic stretch occupies residues D167–P464. Zn(2+)-binding residues include C260, H311, and H441.

It belongs to the class-II aminoacyl-tRNA synthetase family. As to quaternary structure, homodimer. It depends on Zn(2+) as a cofactor.

The protein resides in the cytoplasm. It catalyses the reaction tRNA(Thr) + L-threonine + ATP = L-threonyl-tRNA(Thr) + AMP + diphosphate + H(+). Its function is as follows. Catalyzes the attachment of threonine to tRNA(Thr) in a two-step reaction: L-threonine is first activated by ATP to form Thr-AMP and then transferred to the acceptor end of tRNA(Thr). Also edits incorrectly charged L-seryl-tRNA(Thr). This chain is Threonine--tRNA ligase, found in Mycoplasma pneumoniae (strain ATCC 29342 / M129 / Subtype 1) (Mycoplasmoides pneumoniae).